Here is a 417-residue protein sequence, read N- to C-terminus: Mast cell carboxypeptidase A (417 aa).

A signal peptide spans 1–15 (MRFFLLMAVIYTTLA). Positions 16–109 (IAPVHFDREK…IEKQFDVKDE (94 aa)) are cleaved as a propeptide — activation peptide. The Peptidase M14 domain occupies 118 to 412 (KYNDWDKIVS…LSVKFIAKYI (295 aa)). Cystine bridges form between Cys173–Cys186 and Cys245–Cys268. Zn(2+) contacts are provided by His176 and Glu179. Position 304 (His304) interacts with Zn(2+). Glu378 acts as the Proton donor/acceptor in catalysis.

Belongs to the peptidase M14 family. It depends on Zn(2+) as a cofactor.

The protein resides in the cytoplasmic vesicle. It is found in the secretory vesicle. It carries out the reaction Release of a C-terminal amino acid, but little or no action with -Asp, -Glu, -Arg, -Lys or -Pro.. The polypeptide is Mast cell carboxypeptidase A (Cpa3) (Mus musculus (Mouse)).